The following is a 456-amino-acid chain: Chitobiosyldiphosphodolichol beta-mannosyltransferase (456 aa).

Topologically, residues 1–22 are lumenal; sequence MGEIIKYKGFDHVWQYSGPWLY. A helical transmembrane segment spans residues 23-43; it reads CLIGIYISLPVLAYHILPWIF. The Cytoplasmic segment spans residues 44-103; that stretch reads HKNRSNKRKTISIFVLGDLGHSPRMCYHASSFSKLDYYVNLCGYVETEPSHQIVDDVNID. Residues 104–124 constitute an intramembrane region (helical); that stretch reads IIPIEAIKNTNNLPYIMFAIL. Residues 125–456 are Cytoplasmic-facing; sequence KVVRQCGKIW…TFSSIFENKS (332 aa).

The protein belongs to the glycosyltransferase group 1 family.

It is found in the endoplasmic reticulum membrane. The catalysed reaction is an N,N'-diacetylchitobiosyl-diphospho-di-trans,poly-cis-dolichol + GDP-alpha-D-mannose = a beta-D-Man-(1-&gt;4)-beta-D-GlcNAc-(1-&gt;4)-alpha-D-GlcNAc-diphospho-di-trans,poly-cis-dolichol + GDP + H(+). Its pathway is protein modification; protein glycosylation. Functionally, participates in the formation of the lipid-linked precursor oligosaccharide for N-glycosylation. Involved in assembling the dolichol-pyrophosphate-GlcNAc(2)-Man(5) intermediate on the cytoplasmic surface of the ER. This is Chitobiosyldiphosphodolichol beta-mannosyltransferase (ALG1) from Candida albicans (strain SC5314 / ATCC MYA-2876) (Yeast).